Reading from the N-terminus, the 185-residue chain is MINEIKKDAQERMKKSLESLAHAFGQIRTGKAHPSILGSVMVPYYGTDTPLSGVANVTVKDSQTLQVVPFERNMLGAIDKAIGSAGLNLNPTNLGELLLIKMAPLTEETRKGFTKQARAAAEDARVAVRNIRRDALGELKKLTKDKEISEDEERRGSAEIDKLIKDFEAQIAKATEEKEKDLMAV.

Belongs to the RRF family.

Its subcellular location is the cytoplasm. Responsible for the release of ribosomes from messenger RNA at the termination of protein biosynthesis. May increase the efficiency of translation by recycling ribosomes from one round of translation to another. The protein is Ribosome-recycling factor of Pseudomonas fluorescens (strain ATCC BAA-477 / NRRL B-23932 / Pf-5).